We begin with the raw amino-acid sequence, 177 residues long: Large ribosomal subunit protein uL6 (177 aa).

The protein belongs to the universal ribosomal protein uL6 family. As to quaternary structure, part of the 50S ribosomal subunit.

This protein binds to the 23S rRNA, and is important in its secondary structure. It is located near the subunit interface in the base of the L7/L12 stalk, and near the tRNA binding site of the peptidyltransferase center. This is Large ribosomal subunit protein uL6 from Ectopseudomonas mendocina (strain ymp) (Pseudomonas mendocina).